A 506-amino-acid polypeptide reads, in one-letter code: MEHESFKASERLVTPAYIRQGREARRMHEQLVRQLVEQGKCPKEPWDESTIEIFLNELAVMDSNNFLGNCGVGEREGRVASGMVSRRHYRLIHGIGRSGDISAIQPKAAGSSVLNKLTNSMVLDIIRLAGVRTASSCFVVPMATGMSLTLCFLTLRHKRPKAKYIIWPRIDQKSCFKSMITAGFEPVVIENVLEGDELRTDLDAVEAKITELGAENILCVHSTTSCFAPRVPDRVEELAVICKKYEIPHVVNNAYGVQSSKCMHLIQQGARVGRIDAFVQSLDKNFMVPVGGAVIAGFSDSFVQEISKMYPGRASASPSLDVLITLLSLGASGYNKLLKERKEMFVYLSSELKKLAKELNERLLETPHNPISLALSLTSLSEQSGSAVTQLGSMLFTRQVSGARVVPLGTSQTINGYVFKGFMSHSNNYPCAYLNAASAICIKKQDVDMFIKRLDKCLRLCKKEKHLAKDEPRCAQQTTEDDVAELAQGLGDVLQGETASELLLSG.

The tetramerization stretch occupies residues 1–44; the sequence is MEHESFKASERLVTPAYIRQGREARRMHEQLVRQLVEQGKCPKE. Pyridoxal 5'-phosphate is bound at residue Arg-75. A phosphate loop (P-loop) region spans residues 96–106; sequence GRSGDISAIQP. Substrate contacts are provided by Arg-97, Ser-98, and Gln-105. Arg-271 provides a ligand contact to tRNA. At Lys-284 the chain carries N6-(pyridoxal phosphate)lysine. Substrate is bound at residue Arg-313. TRNA contacts are provided by Arg-398 and Lys-463.

This sequence belongs to the SepSecS family. As to quaternary structure, homotetramer formed by a catalytic dimer and a non-catalytic dimer serving as a binding platform that orients tRNASec for catalysis. Each tetramer binds the CCA ends of two tRNAs which point to the active sites of the catalytic dimer. Requires pyridoxal 5'-phosphate as cofactor.

The protein resides in the cytoplasm. The enzyme catalyses O-phospho-L-seryl-tRNA(Sec) + selenophosphate + H2O = L-selenocysteinyl-tRNA(Sec) + 2 phosphate. The protein operates within aminoacyl-tRNA biosynthesis; selenocysteinyl-tRNA(Sec) biosynthesis; selenocysteinyl-tRNA(Sec) from L-seryl-tRNA(Sec) (archaeal/eukaryal route): step 2/2. Functionally, converts O-phosphoseryl-tRNA(Sec) to selenocysteinyl-tRNA(Sec) required for selenoprotein biosynthesis. The polypeptide is O-phosphoseryl-tRNA(Sec) selenium transferase (sepsecs) (Xenopus tropicalis (Western clawed frog)).